The chain runs to 327 residues: Deoxyribonuclease (327 aa).

The or 35 signal peptide spans 1-24 (MSKKLRNFLVRIIVAAFASFAVMA). The segment at 299–327 (DSTTDEIENSVDDSEEIVYNDTTTEEEEN) is disordered.

The enzyme catalyses Endonucleolytic cleavage to 5'-phosphodinucleotide and 5'-phosphooligonucleotide end-products.. Functionally, may have a role in S.equisimilis virulence. The polypeptide is Deoxyribonuclease (sdc) (Streptococcus dysgalactiae subsp. equisimilis (Streptococcus equisimilis)).